The following is a 704-amino-acid chain: MARQTPIARYRNIGISAHIDAGKTTTSERILFYTGVNHKIGETHEGSATMDWMEQEQERGITITSAATTAFWSGMAKQFEPHRVNIIDTPGHVDFTIEVERSMRVLDGAVMVYCAVGGVQPQSETVWRQANKYHVPRIAFVNKMDRMGANFLRVVEQIKTRLAANPVPLQIPVGAEEDFTGVVDLIKMKAIRWNEEDQGVTFEYEDIPADLQDLAEEWHNNLIESAAEASEDLMDKYLGGEELSEAEIKSALRKRVLDNEIILVTCGSAFKNKGVQAMLDAVIEYLPAPTDVPAIKGILPDGKDTPAERHSSDEEPFSALAFKIATDPFVGNLTFFRVYSGVVNSGDTVLNPVKDKKERFGRIVQMHANKREEIKEVRAGDIAAAIGLKDVTTGDTLCAIDAPIILERMEFPEPVISVAIEPKTKADQEKMGIALNRLAQEDPSFRVSSDEESGQTIIAGMGELHLDVLVDRMRREFKVEANVGKPQVAYRETIREEITDVEGKHAKQSGGRGQYGHVVIDLSPLPSGGEENYVFVNDIVGGVIPKEFIPAVDKGIQEQLKSGPLAGYPVVDIKARLHFGSYHDVDSSEIAFKIAASMAFKEGFMKAKPILLEPIMKVEIETPEDYMGDVIGDLNRRRGMVEGMDDLPTGKIIRAQVPLAEMFGYATDLRSQTQGRASYSMEFLKYNEAPSNVAQAIIEARKAK.

Residues 8–290 (ARYRNIGISA…AVIEYLPAPT (283 aa)) enclose the tr-type G domain. GTP-binding positions include 17-24 (AHIDAGKT), 88-92 (DTPGH), and 142-145 (NKMD).

The protein belongs to the TRAFAC class translation factor GTPase superfamily. Classic translation factor GTPase family. EF-G/EF-2 subfamily.

It localises to the cytoplasm. Its function is as follows. Catalyzes the GTP-dependent ribosomal translocation step during translation elongation. During this step, the ribosome changes from the pre-translocational (PRE) to the post-translocational (POST) state as the newly formed A-site-bound peptidyl-tRNA and P-site-bound deacylated tRNA move to the P and E sites, respectively. Catalyzes the coordinated movement of the two tRNA molecules, the mRNA and conformational changes in the ribosome. The polypeptide is Elongation factor G (Proteus mirabilis (strain HI4320)).